The following is a 1289-amino-acid chain: uncharacterized protein (1289 aa).

An N-terminal signal peptide occupies residues 1–23; it reads MRKYTVIASILLSFLSVLSGGHH. The region spanning 141-277 is the LTD domain; that stretch reads EGYQADLAHI…VVISTNTGKD (137 aa).

This is an uncharacterized protein from Bacillus subtilis (strain 168).